A 274-amino-acid chain; its full sequence is Hematopoietically-expressed homeobox protein hhex (274 aa).

The homeobox DNA-binding region spans 139–198 (RKGGQVRFSNDQTIELEKKFETQKYLSPPERKRLAKMLQLSERQVKTWFQNRRAKWRRLK). The interval 197–274 (LKQENPQGNK…GDKGFYNCAH (78 aa)) is disordered. The segment covering 237–248 (DEPTSSPTSQET) has biased composition (polar residues). Residues 249–263 (LDSEVSDDSDQEVDI) are compositionally biased toward acidic residues.

As to expression, expressed in the most dorsoanterior endomesoderm of the blastula and gastrula embryo, and later is restricted to the forming liver diverticulum.

The protein localises to the nucleus. In terms of biological role, recognizes the DNA sequence 5'-ATTAA-3'. Transcriptional repressor. Regulates the differentiation of both endothelial and blood cells. Probably plays a role in the proliferation of vascular endothelial cells during blood vessel development. Establishes anterior identity at two levels; acts early to enhance canonical wnt-signaling by repressing expression of tle4, and acts later to inhibit nodal-signaling by directly targeting nodal/nr1 and nodal2/nr2. May play a role in liver development. Induces heart development. This is Hematopoietically-expressed homeobox protein hhex from Xenopus tropicalis (Western clawed frog).